The chain runs to 225 residues: Cobalt transport protein CbiM (225 aa).

6 helical membrane passes run V7 to A27, P43 to P63, L76 to I96, T108 to F128, F143 to L163, and F175 to V195.

Belongs to the CbiM family. In terms of assembly, forms an energy-coupling factor (ECF) transporter complex composed of an ATP-binding protein (A component, CbiO), a transmembrane protein (T component, CbiQ) and 2 possible substrate-capture proteins (S components, CbiM and CbiN) of unknown stoichimetry.

The protein localises to the cell inner membrane. It functions in the pathway cofactor biosynthesis; adenosylcobalamin biosynthesis. Its function is as follows. Part of the energy-coupling factor (ECF) transporter complex CbiMNOQ involved in cobalt import. The chain is Cobalt transport protein CbiM from Sorangium cellulosum (strain So ce56) (Polyangium cellulosum (strain So ce56)).